The primary structure comprises 339 residues: Anthranilate phosphoribosyltransferase (339 aa).

5-phospho-alpha-D-ribose 1-diphosphate contacts are provided by residues glycine 80, 83–84, threonine 88, 90–93, 108–116, and serine 120; these read GD, NIST, and KHGNRAVSS. Residue glycine 80 coordinates anthranilate. Serine 92 provides a ligand contact to Mg(2+). Asparagine 111 contributes to the anthranilate binding site. Arginine 166 serves as a coordination point for anthranilate. Mg(2+) contacts are provided by aspartate 225 and glutamate 226.

It belongs to the anthranilate phosphoribosyltransferase family. As to quaternary structure, homodimer. Requires Mg(2+) as cofactor.

The catalysed reaction is N-(5-phospho-beta-D-ribosyl)anthranilate + diphosphate = 5-phospho-alpha-D-ribose 1-diphosphate + anthranilate. The protein operates within amino-acid biosynthesis; L-tryptophan biosynthesis; L-tryptophan from chorismate: step 2/5. In terms of biological role, catalyzes the transfer of the phosphoribosyl group of 5-phosphorylribose-1-pyrophosphate (PRPP) to anthranilate to yield N-(5'-phosphoribosyl)-anthranilate (PRA). In Caldanaerobacter subterraneus subsp. tengcongensis (strain DSM 15242 / JCM 11007 / NBRC 100824 / MB4) (Thermoanaerobacter tengcongensis), this protein is Anthranilate phosphoribosyltransferase.